A 399-amino-acid chain; its full sequence is Formate-dependent phosphoribosylglycinamide formyltransferase (399 aa).

N(1)-(5-phospho-beta-D-ribosyl)glycinamide-binding positions include 8–9 (EL) and Glu68. Residues Arg100, Lys141, 146–151 (SSGHGQ), 185–188 (EALA), and Glu193 each bind ATP. Positions 105–308 (VLAHEELGLP…EFALHARAIL (204 aa)) constitute an ATP-grasp domain. 2 residues coordinate Mg(2+): Glu266 and Glu279. Residues Asp286, Lys361, and 368 to 369 (RR) contribute to the N(1)-(5-phospho-beta-D-ribosyl)glycinamide site.

This sequence belongs to the PurK/PurT family. In terms of assembly, homodimer.

The enzyme catalyses N(1)-(5-phospho-beta-D-ribosyl)glycinamide + formate + ATP = N(2)-formyl-N(1)-(5-phospho-beta-D-ribosyl)glycinamide + ADP + phosphate + H(+). Its pathway is purine metabolism; IMP biosynthesis via de novo pathway; N(2)-formyl-N(1)-(5-phospho-D-ribosyl)glycinamide from N(1)-(5-phospho-D-ribosyl)glycinamide (formate route): step 1/1. Its function is as follows. Involved in the de novo purine biosynthesis. Catalyzes the transfer of formate to 5-phospho-ribosyl-glycinamide (GAR), producing 5-phospho-ribosyl-N-formylglycinamide (FGAR). Formate is provided by PurU via hydrolysis of 10-formyl-tetrahydrofolate. In Bifidobacterium longum (strain NCC 2705), this protein is Formate-dependent phosphoribosylglycinamide formyltransferase.